Consider the following 269-residue polypeptide: Probable aquaporin TIP5-1 (269 aa).

5 consecutive transmembrane segments (helical) span residues A19 to I39, S54 to A74, A84 to W104, F139 to A159, and A177 to L197. The NPA 1 motif lies at N82–A84. An NPA 2 motif is present at residues N203–A205. The helical transmembrane segment at Y223–F243 threads the bilayer.

It belongs to the MIP/aquaporin (TC 1.A.8) family. TIP (TC 1.A.8.10) subfamily. Expressed in leaves and anthers, and at lower levels in roots.

The protein localises to the vacuole membrane. Aquaporins facilitate the transport of water and small neutral solutes across cell membranes. May be involved in transport from the vacuolar compartment to the cytoplasm. The polypeptide is Probable aquaporin TIP5-1 (TIP5;1) (Oryza sativa subsp. japonica (Rice)).